The chain runs to 349 residues: Glycine-rich cell wall structural protein (349 aa).

The N-terminal stretch at 1–23 is a signal peptide; the sequence is MGKVSFGFLGLMLVVVVIGVVEC.

The protein resides in the secreted. The protein localises to the cell wall. Responsible for plasticity of the cell wall. In Arabidopsis thaliana (Mouse-ear cress), this protein is Glycine-rich cell wall structural protein.